The sequence spans 443 residues: 5-methylthioadenosine/S-adenosylhomocysteine deaminase 1 (443 aa).

Zn(2+) is bound by residues His69 and His71. Residues Glu98 and His191 each contribute to the substrate site. His218 is a binding site for Zn(2+). Residues Glu221 and Asp306 each contribute to the substrate site. Residue Asp306 participates in Zn(2+) binding.

Belongs to the metallo-dependent hydrolases superfamily. MTA/SAH deaminase family. Zn(2+) serves as cofactor.

The enzyme catalyses S-adenosyl-L-homocysteine + H2O + H(+) = S-inosyl-L-homocysteine + NH4(+). It carries out the reaction S-methyl-5'-thioadenosine + H2O + H(+) = S-methyl-5'-thioinosine + NH4(+). Functionally, catalyzes the deamination of 5-methylthioadenosine and S-adenosyl-L-homocysteine into 5-methylthioinosine and S-inosyl-L-homocysteine, respectively. Is also able to deaminate adenosine. This Syntrophus aciditrophicus (strain SB) protein is 5-methylthioadenosine/S-adenosylhomocysteine deaminase 1.